The sequence spans 86 residues: Large ribosomal subunit protein uL23 (86 aa).

This sequence belongs to the universal ribosomal protein uL23 family. Part of the 50S ribosomal subunit. Contacts protein L29.

Its function is as follows. Binds to 23S rRNA. One of the proteins that surrounds the polypeptide exit tunnel on the outside of the ribosome. This chain is Large ribosomal subunit protein uL23, found in Thermococcus kodakarensis (strain ATCC BAA-918 / JCM 12380 / KOD1) (Pyrococcus kodakaraensis (strain KOD1)).